A 1547-amino-acid polypeptide reads, in one-letter code: Tubby-related protein 4 (1547 aa).

3 WD repeats span residues 80 to 119, 123 to 162, and 165 to 204; these read GHNSEVVLVRWNEPYQKLATCDADGGIFVWIQYEGRWSVE, DRGAQVSDFTWSHDGTQALISYRDGFVLVGSVSGQRHWSS, and NLESQITCGIWTPDDQQVLFGTADGQVIVMDCHGRMLAHV. Residues 364-414 form the SOCS box domain; it reads ALYVVRVEHRVSSLQLLCQQAIASTLREDKDVNKLTLPPRLCSYLSTAFIP. Residues 530 to 580 form a disordered region; it reads SPKISRSSKSPKLPRISIEARKSPKLPRAAQEISRSPRLPMRKPSMGSPSL. The span at 533–546 shows a compositional bias: low complexity; that stretch reads ISRSSKSPKLPRIS. S577 bears the Phosphoserine mark. Asymmetric dimethylarginine occurs at positions 949 and 954. Phosphoserine is present on residues S1347 and S1378. Residues 1374–1414 form a disordered region; sequence SLISSPRLGREKKKVKSQKDQLKSKKLNKTNEFQDSSESEP. The TUB stretch occupies residues 1436 to 1547; it reads SKRSLRTASE…ALANVTQRLK (112 aa).

The protein belongs to the TUB family.

Its subcellular location is the cytoplasm. The protein operates within protein modification; protein ubiquitination. In terms of biological role, may be a substrate-recognition component of a SCF-like ECS (Elongin-Cullin-SOCS-box protein) E3 ubiquitin ligase complex which mediates the ubiquitination and subsequent proteasomal degradation of target proteins. The sequence is that of Tubby-related protein 4 (Tulp4) from Mus musculus (Mouse).